A 104-amino-acid polypeptide reads, in one-letter code: Large ribosomal subunit protein bL21 (104 aa).

Belongs to the bacterial ribosomal protein bL21 family. In terms of assembly, part of the 50S ribosomal subunit. Contacts protein L20.

Its function is as follows. This protein binds to 23S rRNA in the presence of protein L20. In Leptospira borgpetersenii serovar Hardjo-bovis (strain JB197), this protein is Large ribosomal subunit protein bL21.